The sequence spans 226 residues: Reticulon-like protein B16 (226 aa).

Positions 41 to 224 constitute a Reticulon domain; that stretch reads AADLLLWRRR…RLSWSLSKDK (184 aa). 3 consecutive transmembrane segments (helical) span residues 54 to 74, 75 to 95, and 149 to 169; these read LGVIIISTVAWLIFEFSGLPF, LSVSSDVLLIVIMISFVHARV, and VVICLWLLSAIGSYISLCTLL.

Its subcellular location is the endoplasmic reticulum membrane. The chain is Reticulon-like protein B16 (RTNLB16) from Arabidopsis thaliana (Mouse-ear cress).